Consider the following 1078-residue polypeptide: Zinc finger protein 827 (1078 aa).

Residues 1–10 are compositionally biased toward basic and acidic residues; the sequence is MPRRKQEQPK. The interval 1 to 14 is mediates direct interaction with RBBP4; the sequence is MPRRKQEQPKRLPS. A disordered region spans residues 1–76; sequence MPRRKQEQPK…PDTSLGSATP (76 aa). Residues 3–5 carry the RRK motif; mediates NuRD recruitment to telomeres motif; the sequence is RRK. Composition is skewed to polar residues over residues 33–42 and 62–76; these read YGNSSETPSE and EQST…SATP. Glycyl lysine isopeptide (Lys-Gly) (interchain with G-Cter in SUMO2) cross-links involve residues Lys175, Lys215, and Lys225. A disordered region spans residues 307 to 341; the sequence is SLLPDDPLPLPSSEKKPEKVTPPPPPPPPTAQPPQ. Residues 326–338 are compositionally biased toward pro residues; it reads VTPPPPPPPPTAQ. Residues Lys357 and Lys369 each participate in a glycyl lysine isopeptide (Lys-Gly) (interchain with G-Cter in SUMO2) cross-link. C2H2-type zinc fingers lie at residues 371 to 393, 399 to 421, and 430 to 452; these read FQCP…MVIH, HQCP…MKVH, and FQCQ…MRCH. Residues Lys463, Lys472, Lys520, Lys546, Lys577, Lys584, and Lys594 each participate in a glycyl lysine isopeptide (Lys-Gly) (interchain with G-Cter in SUMO2) cross-link. The disordered stretch occupies residues 466–490; sequence IPDPDVKGSPHLSDSGCLGQQREGG. Positions 594–640 are disordered; the sequence is KEEPKEEESLSMPLPRSSYVFSPEPEVSTPSVSEDPLTPQEGKGSVL. The segment covering 613-627 has biased composition (low complexity); sequence VFSPEPEVSTPSVSE. Residues Lys636 and Lys655 each participate in a glycyl lysine isopeptide (Lys-Gly) (interchain with G-Cter in SUMO2) cross-link. Residue Lys670 forms a Glycyl lysine isopeptide (Lys-Gly) (interchain with G-Cter in SUMO1); alternate linkage. Lys670 participates in a covalent cross-link: Glycyl lysine isopeptide (Lys-Gly) (interchain with G-Cter in SUMO2); alternate. Residues Lys701, Lys707, Lys739, Lys775, and Lys795 each participate in a glycyl lysine isopeptide (Lys-Gly) (interchain with G-Cter in SUMO2) cross-link. 2 C2H2-type zinc fingers span residues 814-836 and 842-864; these read FPCD…LSLH and YKCH…LTVH. Residues Lys867 and Lys888 each participate in a glycyl lysine isopeptide (Lys-Gly) (interchain with G-Cter in SUMO2) cross-link. C2H2-type zinc fingers lie at residues 894–916 and 926–949; these read YSCH…MSLH and ICCT…GTKH. Residues 945–957 are compositionally biased toward basic and acidic residues; sequence IGTKHTGDDRKTP. Positions 945–990 are disordered; it reads IGTKHTGDDRKTPSESNSPSSSSLSTLSDSANGKDDSDSSQKNKGG. Lys955 participates in a covalent cross-link: Glycyl lysine isopeptide (Lys-Gly) (interchain with G-Cter in SUMO2). Residues 958–974 are compositionally biased toward low complexity; sequence SESNSPSSSSLSTLSDS. Positions 976 to 985 are enriched in basic and acidic residues; that stretch reads NGKDDSDSSQ. Lys1011 participates in a covalent cross-link: Glycyl lysine isopeptide (Lys-Gly) (interchain with G-Cter in SUMO2). 2 consecutive C2H2-type zinc fingers follow at residues 1016 to 1038 and 1044 to 1066; these read FECV…LQIH and FECD…KKCH.

The protein belongs to the krueppel C2H2-type zinc-finger protein family. Part of a transcription inhibitory ribonucleoprotein complex composed at least of the circular RNA circZNF827, HNRNPK and HNRNPL. Interacts with the nucleosome remodeling and histone deacetylase/NuRD complex. Interacts with RBBP4; the interaction is direct and recruits RBBP4, a component of the NuRD complex, to telomeres.

Its subcellular location is the nucleus. The protein resides in the chromosome. The protein localises to the telomere. As part of a ribonucleoprotein complex composed at least of HNRNPK, HNRNPL and the circular RNA circZNF827 that nucleates the complex on chromatin, may negatively regulate the transcription of genes involved in neuronal differentiation. Could also recruit the nucleosome remodeling and histone deacetylase/NuRD complex to telomeric regions of chromosomes to regulate chromatin remodeling as part of telomere maintenance. The chain is Zinc finger protein 827 (Znf827) from Mus musculus (Mouse).